A 33-amino-acid chain; its full sequence is Cytochrome b6-f complex subunit 8 (33 aa).

The chain crosses the membrane as a helical span at residues 2 to 22; the sequence is IFTLGWASLAAIFTFSIAMVV.

Belongs to the PetN family. In terms of assembly, the 4 large subunits of the cytochrome b6-f complex are cytochrome b6, subunit IV (17 kDa polypeptide, PetD), cytochrome f and the Rieske protein, while the 4 small subunits are PetG, PetL, PetM and PetN. The complex functions as a dimer.

Its subcellular location is the cellular thylakoid membrane. Component of the cytochrome b6-f complex, which mediates electron transfer between photosystem II (PSII) and photosystem I (PSI), cyclic electron flow around PSI, and state transitions. This chain is Cytochrome b6-f complex subunit 8, found in Prochlorococcus marinus (strain NATL2A).